The following is a 131-amino-acid chain: Small ribosomal subunit protein bS6 (131 aa).

The segment at 96–131 (VTEASPMVKAKDERRERRDDFANETADDAEAGDSEE) is disordered. A compositionally biased stretch (basic and acidic residues) spans 104-116 (KAKDERRERRDDF). The span at 120–131 (TADDAEAGDSEE) shows a compositional bias: acidic residues.

It belongs to the bacterial ribosomal protein bS6 family.

In terms of biological role, binds together with bS18 to 16S ribosomal RNA. The protein is Small ribosomal subunit protein bS6 of Salmonella arizonae (strain ATCC BAA-731 / CDC346-86 / RSK2980).